The primary structure comprises 549 residues: Acetyl-coenzyme A transporter 1 (549 aa).

The segment covering 1–12 (MSPTISHKDSSR) has biased composition (basic and acidic residues). Residues 1-46 (MSPTISHKDSSRQRRPGNFSHSLDMKSGPLPPGGWDDSHLDSAGRE) form a disordered region. Over 1–74 (MSPTISHKDS…PQSFRAELSS (74 aa)) the chain is Cytoplasmic. Phosphoserine occurs at positions 22 and 42. Positions 36 to 46 (DDSHLDSAGRE) are enriched in basic and acidic residues. The chain crosses the membrane as a helical span at residues 75–95 (ILLLLFLYVLQGIPLGLAGSI). Residues 96 to 113 (PLILQSKNVSYTDQAFFS) lie on the Extracellular side of the membrane. N-linked (GlcNAc...) asparagine glycosylation occurs at N103. The helical transmembrane segment at 114–134 (FVFWPFSLKLLWAPLVDAVYV) threads the bilayer. Residues 135–141 (KNFGRRK) lie on the Cytoplasmic side of the membrane. A helical transmembrane segment spans residues 142–162 (SWLVPTQYILGLFMIYLSTQV). The Extracellular portion of the chain corresponds to 163-175 (DRLLGNTDDRTPD). Residues 176-196 (VIALTVAFFLFEFLAATQDIA) traverse the membrane as a helical segment. The Cytoplasmic portion of the chain corresponds to 197–217 (VDGWALTMLSRENVGYASTCN). Residues 218–238 (SVGQTAGYFLGNVLFLALESA) form a helical membrane-spanning segment. Over 239–256 (DFCNKYLRFQPQPRGIVT) the chain is Extracellular. The chain crosses the membrane as a helical span at residues 257–277 (LSDFLFFWGTVFLITTTLVAL). The Cytoplasmic portion of the chain corresponds to 278 to 299 (LKKENEVSVVKEETQGITDTYK). The chain crosses the membrane as a helical span at residues 300-320 (LLFAIIKMPAVLTFCLLILTA). At 321–343 (KIGFSAADAVTGLKLVEEGVPKE) the chain is on the extracellular side. Residues 344–364 (HLALLAVPMVPLQIILPLIIS) form a helical membrane-spanning segment. Topologically, residues 365–378 (KYTAGPQPLNTFYK) are cytoplasmic. The chain crosses the membrane as a helical span at residues 379-398 (AMPYRLLLGLEYALLVWWTP). Over 399-404 (KVEHQG) the chain is Extracellular. Residues 405-425 (GFPIYYYIVVLLSYALHQVTV) traverse the membrane as a helical segment. Residues 426-508 (YSMYVSIMAF…LGGSCVTALD (83 aa)) are Cytoplasmic-facing. A helical transmembrane segment spans residues 509–529 (GYYVESIICVFIGFGWWFFLG). The Extracellular portion of the chain corresponds to 530–549 (PKFKKLQDEGSSSWKCKRNN).

The protein belongs to the SLC33A transporter family. As to quaternary structure, homodimerizes. As to expression, ubiquitous. Detected in heart, brain, placenta, lung, liver, skeletal muscle, kidney and pancreas. With strongest signals in pancreas.

The protein resides in the endoplasmic reticulum membrane. It catalyses the reaction acetyl-CoA(in) = acetyl-CoA(out). Functionally, acetyl-CoA transporter that mediates active acetyl-CoA import through the endoplasmic reticulum (ER) membrane into the ER lumen where specific ER-based acetyl-CoA:lysine acetyltransferases are responsible for the acetylation of ER-based protein substrates, such as BACE1. Necessary for O-acetylation of gangliosides. The protein is Acetyl-coenzyme A transporter 1 of Homo sapiens (Human).